We begin with the raw amino-acid sequence, 332 residues long: MKVLLYSQKQSMLKKSGIGRAFYHQKRALEAVGIEYTTDPKDTYDLVHVNIAHSNKIKKFRKKYPVIVHGHSTVQDFRRSFAFWRVIAPFFYKHLQNIYGIADLIITPTRYSKFLIESMHVVKSPVVALSNGIDLDAYEYKQENVDAFRKHFDLEPNQKVVIGVGLLFERKGIHDFIEVARTMPNVTFIWFGNLSKLATTHFIRKRIKNKPKNMIMPGYVDGAVIKGAFSGADCVFFPSYEETEGIVVLEGLASKTPVVLRDIPVYYDWLFHKEHVLKGHNNFEFSKLIEKVLHEDQTEMIENGYKIVQDRSIEKIGEGLKQAYQEVIKIKR.

This sequence belongs to the glycosyltransferase group 1 family. Glycosyltransferase 4 subfamily. Mg(2+) is required as a cofactor.

It localises to the cell membrane. It catalyses the reaction a 1,2-diacyl-sn-glycerol + UDP-alpha-D-glucose = a 1,2-diacyl-3-O-(alpha-D-glucopyranosyl)-sn-glycerol + UDP + H(+). The enzyme catalyses a 1,2-diacyl-3-O-(alpha-D-glucopyranosyl)-sn-glycerol + UDP-alpha-D-glucose = a 1,2-diacyl-3-O-[alpha-D-glucosyl-(1-&gt; 2)-alpha-D-glucosyl]-sn-glycerol + UDP + H(+). Its pathway is glycolipid metabolism; diglucosyl-diacylglycerol biosynthesis. Its activity is regulated as follows. Activated by the negatively charged lipids phosphatidylglycerol (PG), cardiolipin (CL), nonbilayer-prone 1,3-DAG, 1,2-dioleoylphosphatidylglycerol (DOPG) and 1,2-dioleoylphosphatidylserine (DOPS). Inhibited by 1,2-diacyl-3-O-(alpha-D-galactopyranosyl)-sn-glycerol, 1,2-diacyl-3-O-[6-O-acyl(alpha-D-glucopyranosyl)]-sn-glycerol and 1,2-diacyl-3-O-[alpha-D-glucopyranosyl-(1-&gt;2)-O-(6-O-acyl-alpha-D-glucopyranosyl)]-sn-glycerol. In terms of biological role, processive glucosyltransferase involved in the biosynthesis of both the non-bilayer-prone alpha-monoglucosyldiacylglycerol and the bilayer-forming membrane lipid alpha-diglucosyldiacylglycerol. These are major components for maintaining the anionic lipid surface charge density, for balancing the bilayer to non-bilayer phase equilibria and for keeping a constant lipid bilayer spontaneous curvature (curvature packing stress). Catalyzes the transfer of a glucosyl residue from UDP-Glc to diacylglycerol (DAG) acceptor to form the corresponding alpha-glucosyl-DAG (1,2-diacyl-3-O-(alpha-D-glucopyranosyl)-sn-glycerol), which then acts as acceptor to give alpha-diglucosyl-DAG product (3-O-(alpha-D-glucopyranosyl-alpha-(1-&gt;2)-D-glucopyranosyl)-1,2-diacyl-sn-glycerol). It can only use UDP-Glc as sugar donor. The sequence is that of Processive diacylglycerol alpha-glucosyltransferase (dgs) from Acholeplasma laidlawii.